Here is a 178-residue protein sequence, read N- to C-terminus: Large ribosomal subunit protein uL13m (178 aa).

The protein belongs to the universal ribosomal protein uL13 family. In terms of assembly, component of the mitochondrial ribosome large subunit (39S) which comprises a 16S rRNA and about 50 distinct proteins.

The protein localises to the mitochondrion. The protein is Large ribosomal subunit protein uL13m (mRpL13) of Drosophila melanogaster (Fruit fly).